The following is a 201-amino-acid chain: Molybdenum cofactor guanylyltransferase (201 aa).

GTP is bound by residues 15-17 (LCG), lysine 28, aspartate 74, and aspartate 104. Mg(2+) is bound at residue aspartate 104.

The protein belongs to the MobA family. Monomer. It depends on Mg(2+) as a cofactor.

The protein localises to the cytoplasm. It catalyses the reaction Mo-molybdopterin + GTP + H(+) = Mo-molybdopterin guanine dinucleotide + diphosphate. In terms of biological role, transfers a GMP moiety from GTP to Mo-molybdopterin (Mo-MPT) cofactor (Moco or molybdenum cofactor) to form Mo-molybdopterin guanine dinucleotide (Mo-MGD) cofactor. This Ectopseudomonas mendocina (strain ymp) (Pseudomonas mendocina) protein is Molybdenum cofactor guanylyltransferase.